The chain runs to 107 residues: Large ribosomal subunit protein uL24 (107 aa).

Belongs to the universal ribosomal protein uL24 family. Part of the 50S ribosomal subunit.

In terms of biological role, one of two assembly initiator proteins, it binds directly to the 5'-end of the 23S rRNA, where it nucleates assembly of the 50S subunit. One of the proteins that surrounds the polypeptide exit tunnel on the outside of the subunit. This Streptomyces griseus subsp. griseus (strain JCM 4626 / CBS 651.72 / NBRC 13350 / KCC S-0626 / ISP 5235) protein is Large ribosomal subunit protein uL24.